The chain runs to 581 residues: Arginine--tRNA ligase (581 aa).

A 'HIGH' region motif is present at residues A131–H141.

This sequence belongs to the class-I aminoacyl-tRNA synthetase family. In terms of assembly, monomer.

Its subcellular location is the cytoplasm. It catalyses the reaction tRNA(Arg) + L-arginine + ATP = L-arginyl-tRNA(Arg) + AMP + diphosphate. The chain is Arginine--tRNA ligase from Ruegeria pomeroyi (strain ATCC 700808 / DSM 15171 / DSS-3) (Silicibacter pomeroyi).